We begin with the raw amino-acid sequence, 418 residues long: Serine/threonine transporter SstT (418 aa).

Transmembrane regions (helical) follow at residues 16-36, 45-65, 83-103, 142-162, 192-212, 218-238, 289-309, 317-337, and 364-384; these read SLVS…TLIP, LGTL…LLLV, LLIL…VASF, ALLE…GLSL, PLGI…SALL, LIVL…LIVF, VSIP…ITVL, LGIS…TISA, and VAMQ…SAET.

This sequence belongs to the dicarboxylate/amino acid:cation symporter (DAACS) (TC 2.A.23) family.

The protein localises to the cell inner membrane. The catalysed reaction is L-serine(in) + Na(+)(in) = L-serine(out) + Na(+)(out). It catalyses the reaction L-threonine(in) + Na(+)(in) = L-threonine(out) + Na(+)(out). Its function is as follows. Involved in the import of serine and threonine into the cell, with the concomitant import of sodium (symport system). In Tolumonas auensis (strain DSM 9187 / NBRC 110442 / TA 4), this protein is Serine/threonine transporter SstT.